The following is a 346-amino-acid chain: Phosphoribosylformylglycinamidine cyclo-ligase (346 aa).

The protein belongs to the AIR synthase family.

It is found in the cytoplasm. The enzyme catalyses 2-formamido-N(1)-(5-O-phospho-beta-D-ribosyl)acetamidine + ATP = 5-amino-1-(5-phospho-beta-D-ribosyl)imidazole + ADP + phosphate + H(+). The protein operates within purine metabolism; IMP biosynthesis via de novo pathway; 5-amino-1-(5-phospho-D-ribosyl)imidazole from N(2)-formyl-N(1)-(5-phospho-D-ribosyl)glycinamide: step 2/2. The protein is Phosphoribosylformylglycinamidine cyclo-ligase of Bacillus licheniformis (strain ATCC 14580 / DSM 13 / JCM 2505 / CCUG 7422 / NBRC 12200 / NCIMB 9375 / NCTC 10341 / NRRL NRS-1264 / Gibson 46).